A 224-amino-acid polypeptide reads, in one-letter code: Cytochrome c oxidase subunit 2 (224 aa).

Residues 1 to 26 lie on the Mitochondrial intermembrane side of the membrane; the sequence is MSTWGQMNLMDPASPIQIEMMLFHDH. Residues 27-48 form a helical membrane-spanning segment; sequence AMAILIGIFTLVSCLGVKLCFN. Residues 49–62 lie on the Mitochondrial matrix side of the membrane; it reads TLSTRTMHEAQLLE. The chain crosses the membrane as a helical span at residues 63–82; it reads TLWTILPAFLLVWLALPSLR. The Mitochondrial intermembrane segment spans residues 83-224; sequence LLYLLDEQSS…DVKDFINMCN (142 aa). Cu cation is bound by residues histidine 161, cysteine 196, glutamate 198, cysteine 200, histidine 204, and methionine 207. Glutamate 198 serves as a coordination point for Mg(2+).

This sequence belongs to the cytochrome c oxidase subunit 2 family. In terms of assembly, component of the cytochrome c oxidase (complex IV, CIV), a multisubunit enzyme composed of a catalytic core of 3 subunits and several supernumerary subunits. The complex exists as a monomer or a dimer and forms supercomplexes (SCs) in the inner mitochondrial membrane with ubiquinol-cytochrome c oxidoreductase (cytochrome b-c1 complex, complex III, CIII). It depends on Cu cation as a cofactor.

It is found in the mitochondrion inner membrane. It catalyses the reaction 4 Fe(II)-[cytochrome c] + O2 + 8 H(+)(in) = 4 Fe(III)-[cytochrome c] + 2 H2O + 4 H(+)(out). Component of the cytochrome c oxidase, the last enzyme in the mitochondrial electron transport chain which drives oxidative phosphorylation. The respiratory chain contains 3 multisubunit complexes succinate dehydrogenase (complex II, CII), ubiquinol-cytochrome c oxidoreductase (cytochrome b-c1 complex, complex III, CIII) and cytochrome c oxidase (complex IV, CIV), that cooperate to transfer electrons derived from NADH and succinate to molecular oxygen, creating an electrochemical gradient over the inner membrane that drives transmembrane transport and the ATP synthase. Cytochrome c oxidase is the component of the respiratory chain that catalyzes the reduction of oxygen to water. Electrons originating from reduced cytochrome c in the intermembrane space (IMS) are transferred via the dinuclear copper A center (CU(A)) of subunit 2 and heme A of subunit 1 to the active site in subunit 1, a binuclear center (BNC) formed by heme A3 and copper B (CU(B)). The BNC reduces molecular oxygen to 2 water molecules using 4 electrons from cytochrome c in the IMS and 4 protons from the mitochondrial matrix. This Albinaria turrita (Door snail) protein is Cytochrome c oxidase subunit 2 (COII).